The sequence spans 659 residues: Protein FAM161A (659 aa).

The interval 34–59 (LGERQQQRTASVSPQRLPRTSMGTPA) is disordered. The stretch at 96–120 (YVQVEKLKKAHLQNMEQLEKMYDKK) forms a coiled coil. Disordered regions lie at residues 165 to 190 (GSVS…EHSV) and 401 to 428 (LAPG…PKIS). A compositionally biased stretch (basic residues) spans 408–426 (GTKKGKCYKPKEKQKHKPK). A coiled-coil region spans residues 531–557 (AIRKREKQRTKDYMKELEAMEQRVLNK). The tract at residues 594–659 (NGQSASVDEH…TDEDHSMEEI (66 aa)) is disordered. The segment covering 600-616 (VDEHVSVREENNPRAES) has biased composition (basic and acidic residues). A compositionally biased stretch (acidic residues) spans 637–650 (PESEEAQEEDAYST).

The protein belongs to the FAM161 family.

The protein resides in the cytoplasm. It is found in the cytoskeleton. The protein localises to the cilium basal body. Its subcellular location is the cell projection. It localises to the cilium. The protein resides in the microtubule organizing center. It is found in the centrosome. The protein localises to the centriole. Its function is as follows. Involved in ciliogenesis. In Xenopus tropicalis (Western clawed frog), this protein is Protein FAM161A (fam161a).